The following is a 134-amino-acid chain: STAG3-like protein 3 (134 aa).

The region spanning 10-95 (PKVTCRDVLP…GCFKDWMVSM (86 aa)) is the SCD domain.

Belongs to the SCC3 family.

The protein localises to the nucleus. In Homo sapiens (Human), this protein is STAG3-like protein 3 (STAG3L3).